We begin with the raw amino-acid sequence, 740 residues long: Protein SMY2 (740 aa).

2 positions are modified to phosphoserine: Ser12 and Ser96. At Thr129 the chain carries Phosphothreonine. A GYF domain is found at 205-261 (ESSWRYIDTQGQIHGPFTTQMMSQWYIGGYFASTLQISRLGSTPETLGINDIFITLG). Thr311 is modified (phosphothreonine). Disordered regions lie at residues 346–510 (ISQT…KEEL), 523–548 (PSNQTIDIKSQFQKSPKGMKESSPLK), and 567–592 (QSSSKQVKSTSSASTTTSSWTTVTSK). Over residues 364 to 439 (EKGKKEKSES…KKSEKTKKDT (76 aa)) the composition is skewed to basic and acidic residues. Residues 369–440 (EKSESVAKAL…KSEKTKKDTQ (72 aa)) are a coiled coil. Low complexity predominate over residues 452 to 467 (LPSLNSSSANPAPWAS). A compositionally biased stretch (polar residues) spans 474 to 486 (AIETSIKNGVSST). Residues 500–510 (NSKEEKQKEEL) show a composition bias toward basic and acidic residues. Residues 523–536 (PSNQTIDIKSQFQK) are compositionally biased toward polar residues. Ser545 carries the post-translational modification Phosphoserine. Ser602 is subject to Phosphoserine.

Belongs to the SMY2/mpd2 family. In terms of assembly, interacts with EAP1 and MSL5 (via the GYP domain).

It is found in the cytoplasm. Its function is as follows. Suppressor of the MYO2 gene. The chain is Protein SMY2 (SMY2) from Saccharomyces cerevisiae (strain ATCC 204508 / S288c) (Baker's yeast).